A 440-amino-acid chain; its full sequence is F-box protein pof12 (440 aa).

One can recognise an F-box domain in the interval 8–54 (KNPASIFSHETLLHVLNDLSAHDLAALERVSRSWNSIVRRSSVWHNL).

As to quaternary structure, interacts with skp1.

The protein resides in the nucleus. The chain is F-box protein pof12 (pof12) from Schizosaccharomyces pombe (strain 972 / ATCC 24843) (Fission yeast).